The chain runs to 285 residues: Undecaprenyl-diphosphatase 2 (285 aa).

Transmembrane regions (helical) follow at residues 5 to 25 (MDLL…LLPV), 47 to 67 (MTFL…VYFW), 86 to 106 (WYVL…QSLI), 122 to 142 (LFSN…LIIL), 156 to 176 (LPSA…RGFS), 198 to 218 (FSFA…LVRL), 235 to 255 (SLLL…LLAL), and 265 to 285 (GRWY…LTLA).

The protein belongs to the UppP family.

It localises to the cell inner membrane. It catalyses the reaction di-trans,octa-cis-undecaprenyl diphosphate + H2O = di-trans,octa-cis-undecaprenyl phosphate + phosphate + H(+). Catalyzes the dephosphorylation of undecaprenyl diphosphate (UPP). Confers resistance to bacitracin. The chain is Undecaprenyl-diphosphatase 2 from Acinetobacter baylyi (strain ATCC 33305 / BD413 / ADP1).